A 925-amino-acid polypeptide reads, in one-letter code: Serine/threonine-protein kinase SIK2 (925 aa).

The 252-residue stretch at 20–271 folds into the Protein kinase domain; the sequence is YDIEGTLGKG…IAQIKEHKWM (252 aa). Thr25 is modified (phosphothreonine). ATP contacts are provided by residues 26–34 and Lys49; that span reads LGKGNFAVV. N6-acetyllysine; by EP300 is present on Lys53. Asp142 (proton acceptor) is an active-site residue. At Thr175 the chain carries Phosphothreonine. The region spanning 295-335 is the UBA domain; it reads EFNEQVLRLMHSLGIDQQKTIESLQNKSYNHFAAIYFLLVE. Ser534 is modified (phosphoserine). The segment at 564–586 is disordered; the sequence is ALSSQKREVHNRSPVSFREGRRA. The residue at position 587 (Ser587) is a Phosphoserine. Disordered regions lie at residues 630-674, 742-776, and 800-895; these read PNLA…PRQS, SSYPQPSQQLPLPRQETPPPSQQAPPFSLTQPLSP, and QPLP…SSYD. Composition is skewed to low complexity over residues 648 to 659 and 742 to 756; these read QEEVSQQQESVS and SSYPQPSQQLPLPRQ. The span at 765–774 shows a compositional bias: polar residues; that stretch reads APPFSLTQPL. A compositionally biased stretch (low complexity) spans 808–820; that stretch reads PRAAPLPTQLQQQ. The span at 821–833 shows a compositional bias: pro residues; sequence QPPPPPPPPPPRQ.

The protein belongs to the protein kinase superfamily. CAMK Ser/Thr protein kinase family. SNF1 subfamily. As to quaternary structure, interacts with and phosphorylates TORC2/CRTC2. Mg(2+) serves as cofactor. Phosphorylated at Thr-175 by STK11/LKB1 in complex with STE20-related adapter-alpha (STRADA) pseudo kinase and CAB39. Phosphorylated at Thr-484 in response to insulin in adipocytes. In terms of processing, acetylation at Lys-53 inhibits kinase activity. Deacetylated by HDAC6.

The protein localises to the cytoplasm. The protein resides in the endoplasmic reticulum membrane. It catalyses the reaction L-seryl-[protein] + ATP = O-phospho-L-seryl-[protein] + ADP + H(+). It carries out the reaction L-threonyl-[protein] + ATP = O-phospho-L-threonyl-[protein] + ADP + H(+). With respect to regulation, activated by phosphorylation on Thr-175. In terms of biological role, serine/threonine-protein kinase that plays a role in many biological processes such as fatty acid oxidation, autophagy, immune response or glucose metabolism. Phosphorylates 'Ser-794' of IRS1 in insulin-stimulated adipocytes, potentially modulating the efficiency of insulin signal transduction. Inhibits CREB activity by phosphorylating and repressing TORCs, the CREB-specific coactivators. Phosphorylates EP300 and thus inhibits its histone acetyltransferase activity. In turn, regulates the DNA-binding ability of several transcription factors such as PPARA or MLXIPL. Also plays a role in thymic T-cell development. The chain is Serine/threonine-protein kinase SIK2 (SIK2) from Pongo abelii (Sumatran orangutan).